The chain runs to 53 residues: 20 kDa chaperonin (53 aa).

Cpn-10 domain regions lie at residues 1 to 10 and 11 to 53; these read YTSIKPLGDR and VAEA…KITP.

Belongs to the GroES chaperonin family. In terms of assembly, forms stable complexes with cpn60 in the presence of ATP. Homotetramer.

The protein resides in the plastid. The protein localises to the chloroplast. Seems to function only as a co-chaperone, along with cpn60, and in certain cases is essential for the discharge of biologically active proteins from cpn60. The chain is 20 kDa chaperonin from Populus euphratica (Euphrates poplar).